Here is a 184-residue protein sequence, read N- to C-terminus: MAKYDKADLERRMHGAVESLKHDLAGLRTGRANAALLDPVTVEVYGSQMPLNQIASISVPEPRMLSVQVWDKANVGPVDKAIRSAGLGLNPIVDGQMLRLPIPEMTQERRKELSKLAGQYAEKARVAVRNVRRDGMDNLKQDENKKEISEDERKRHETEVQKLTDATIAEIDAAATAKEKEILG.

A compositionally biased stretch (basic and acidic residues) spans 133-162 (RDGMDNLKQDENKKEISEDERKRHETEVQK). The interval 133-163 (RDGMDNLKQDENKKEISEDERKRHETEVQKL) is disordered.

The protein belongs to the RRF family.

It localises to the cytoplasm. In terms of biological role, responsible for the release of ribosomes from messenger RNA at the termination of protein biosynthesis. May increase the efficiency of translation by recycling ribosomes from one round of translation to another. This chain is Ribosome-recycling factor, found in Sphingopyxis alaskensis (strain DSM 13593 / LMG 18877 / RB2256) (Sphingomonas alaskensis).